The following is a 321-amino-acid chain: Hydrolase 3 (321 aa).

The Involved in the stabilization of the negatively charged intermediate by the formation of the oxyanion hole signature appears at 80–82; the sequence is HGA. Catalysis depends on residues serine 172 and aspartate 267.

The protein belongs to the 'GDXG' lipolytic enzyme family.

The catalysed reaction is dihydroprecondylocarpine acetate + NADPH = (+)-vincadifformine + acetate + NADP(+). The protein operates within alkaloid biosynthesis. Functionally, component of the seco-iridoid and derivatives monoterpenoid indole alkaloids (MIAs, e.g. vincadifformine) biosynthesis pathway. Catalyzes the conversion of O-acetylstemmadenine (OAS) to vincadifformine. May also trigger the formation of additional unknown MIAs. The polypeptide is Hydrolase 3 (Catharanthus roseus (Madagascar periwinkle)).